The primary structure comprises 82 residues: Protein C14 (82 aa).

In Homo sapiens (Human), this protein is Protein C14.